We begin with the raw amino-acid sequence, 79 residues long: CDC42 small effector protein 1 (79 aa).

S-palmitoyl cysteine attachment occurs at residues C10 and C11. The CRIB domain maps to 30–43; that stretch reads IGEPMNFVHLTHIG. The interval 48–79 is disordered; it reads GAGDGLAMTGAVQEQMRSKGNRDRPWSNSRAL. Over residues 63 to 72 the composition is skewed to basic and acidic residues; that stretch reads MRSKGNRDRP.

Belongs to the CDC42SE/SPEC family. As to quaternary structure, interacts with CDC42 (in GTP-bound form). Interacts weakly with RAC1 and not at all with RHOA.

The protein resides in the cytoplasm. The protein localises to the cytoskeleton. It localises to the cell membrane. Its function is as follows. Probably involved in the organization of the actin cytoskeleton by acting downstream of CDC42, inducing actin filament assembly. Alters CDC42-induced cell shape changes. In activated T-cells, may play a role in CDC42-mediated F-actin accumulation at the immunological synapse. May play a role in early contractile events in phagocytosis in macrophages. The polypeptide is CDC42 small effector protein 1 (Cdc42se1) (Rattus norvegicus (Rat)).